A 364-amino-acid chain; its full sequence is Uroporphyrinogen decarboxylase (364 aa).

Substrate-binding positions include Arg-28–Arg-32, Asp-78, Tyr-160, Thr-215, and His-333.

This sequence belongs to the uroporphyrinogen decarboxylase family. In terms of assembly, homodimer.

Its subcellular location is the cytoplasm. The enzyme catalyses uroporphyrinogen III + 4 H(+) = coproporphyrinogen III + 4 CO2. The protein operates within porphyrin-containing compound metabolism; protoporphyrin-IX biosynthesis; coproporphyrinogen-III from 5-aminolevulinate: step 4/4. In terms of biological role, catalyzes the decarboxylation of four acetate groups of uroporphyrinogen-III to yield coproporphyrinogen-III. This is Uroporphyrinogen decarboxylase from Burkholderia mallei (strain NCTC 10247).